The primary structure comprises 351 residues: Peptide chain release factor 1 (351 aa).

The residue at position 229 (Gln229) is an N5-methylglutamine.

This sequence belongs to the prokaryotic/mitochondrial release factor family. In terms of processing, methylated by PrmC. Methylation increases the termination efficiency of RF1.

It localises to the cytoplasm. In terms of biological role, peptide chain release factor 1 directs the termination of translation in response to the peptide chain termination codons UAG and UAA. The protein is Peptide chain release factor 1 of Cereibacter sphaeroides (strain ATCC 17023 / DSM 158 / JCM 6121 / CCUG 31486 / LMG 2827 / NBRC 12203 / NCIMB 8253 / ATH 2.4.1.) (Rhodobacter sphaeroides).